The sequence spans 421 residues: Type II methyltransferase M.TaqI (421 aa).

Over residues 1–18 (MGLPPLLSLPSNSAPRSL) the composition is skewed to low complexity. The tract at residues 1–20 (MGLPPLLSLPSNSAPRSLGR) is disordered. Residues threonine 23, 45 to 48 (EPAC), glutamate 71, aspartate 89, and proline 107 contribute to the S-adenosyl-L-methionine site.

It belongs to the N(4)/N(6)-methyltransferase family.

It catalyses the reaction a 2'-deoxyadenosine in DNA + S-adenosyl-L-methionine = an N(6)-methyl-2'-deoxyadenosine in DNA + S-adenosyl-L-homocysteine + H(+). A gamma subtype methylase that recognizes the double-stranded sequence 5'-TCGA-3', methylates A-4 on both strands and protects the DNA from cleavage by the TaqI endonuclease. This chain is Type II methyltransferase M.TaqI (taqIM), found in Thermus aquaticus.